The chain runs to 304 residues: D-alanine--D-alanine ligase (304 aa).

Positions 103–299 (KLIWQALGLP…FADLCIEILK (197 aa)) constitute an ATP-grasp domain. Position 129-184 (129-184 (EEKLGLPMFVKPAAEGSSVGVVKVKGKGRLKSVYEELKHLQGEIIAERFIGGGEYS)) interacts with ATP. Mg(2+)-binding residues include aspartate 253, glutamate 266, and asparagine 268.

This sequence belongs to the D-alanine--D-alanine ligase family. The cofactor is Mg(2+). Requires Mn(2+) as cofactor.

Its subcellular location is the cytoplasm. It carries out the reaction 2 D-alanine + ATP = D-alanyl-D-alanine + ADP + phosphate + H(+). Its pathway is cell wall biogenesis; peptidoglycan biosynthesis. In terms of biological role, cell wall formation. The sequence is that of D-alanine--D-alanine ligase from Neisseria meningitidis serogroup B (strain ATCC BAA-335 / MC58).